A 460-amino-acid polypeptide reads, in one-letter code: Light-independent protochlorophyllide reductase subunit N (460 aa).

Residues Cys-22, Cys-47, and Cys-107 each contribute to the [4Fe-4S] cluster site.

Belongs to the BchN/ChlN family. As to quaternary structure, protochlorophyllide reductase is composed of three subunits; ChlL, ChlN and ChlB. Forms a heterotetramer of two ChlB and two ChlN subunits. [4Fe-4S] cluster serves as cofactor.

It localises to the plastid. Its subcellular location is the cyanelle. The catalysed reaction is chlorophyllide a + oxidized 2[4Fe-4S]-[ferredoxin] + 2 ADP + 2 phosphate = protochlorophyllide a + reduced 2[4Fe-4S]-[ferredoxin] + 2 ATP + 2 H2O. It participates in porphyrin-containing compound metabolism; chlorophyll biosynthesis (light-independent). Functionally, component of the dark-operative protochlorophyllide reductase (DPOR) that uses Mg-ATP and reduced ferredoxin to reduce ring D of protochlorophyllide (Pchlide) to form chlorophyllide a (Chlide). This reaction is light-independent. The NB-protein (ChlN-ChlB) is the catalytic component of the complex. The polypeptide is Light-independent protochlorophyllide reductase subunit N (Cyanophora paradoxa).